The chain runs to 254 residues: Adenosylcobinamide-GDP ribazoletransferase (254 aa).

A run of 6 helical transmembrane segments spans residues 28 to 48 (FRQTPVAFTVIGYPLGTIVAL), 62 to 81 (IGVYLLILIGVTGITHIDGI), 109 to 129 (VGVGGALAVTVTVVSLALGVL), 138 to 158 (VTFILVLTAEVGAKSAMALLV), 179 to 199 (LSLFPVILALTPLLLAIPYLG), and 200 to 220 (ASPTAAVVLTPLIVALVIKQW).

It belongs to the CobS family. It depends on Mg(2+) as a cofactor.

It localises to the cell membrane. The catalysed reaction is alpha-ribazole + adenosylcob(III)inamide-GDP = adenosylcob(III)alamin + GMP + H(+). It carries out the reaction alpha-ribazole 5'-phosphate + adenosylcob(III)inamide-GDP = adenosylcob(III)alamin 5'-phosphate + GMP + H(+). The protein operates within cofactor biosynthesis; adenosylcobalamin biosynthesis; adenosylcobalamin from cob(II)yrinate a,c-diamide: step 7/7. Functionally, joins adenosylcobinamide-GDP and alpha-ribazole to generate adenosylcobalamin (Ado-cobalamin). Also synthesizes adenosylcobalamin 5'-phosphate from adenosylcobinamide-GDP and alpha-ribazole 5'-phosphate. This is Adenosylcobinamide-GDP ribazoletransferase from Haloquadratum walsbyi (strain DSM 16790 / HBSQ001).